The chain runs to 305 residues: UDP-3-O-acyl-N-acetylglucosamine deacetylase (305 aa).

Positions 77, 234, and 238 each coordinate Zn(2+). Catalysis depends on histidine 261, which acts as the Proton donor.

It belongs to the LpxC family. Requires Zn(2+) as cofactor.

The catalysed reaction is a UDP-3-O-[(3R)-3-hydroxyacyl]-N-acetyl-alpha-D-glucosamine + H2O = a UDP-3-O-[(3R)-3-hydroxyacyl]-alpha-D-glucosamine + acetate. The protein operates within glycolipid biosynthesis; lipid IV(A) biosynthesis; lipid IV(A) from (3R)-3-hydroxytetradecanoyl-[acyl-carrier-protein] and UDP-N-acetyl-alpha-D-glucosamine: step 2/6. Catalyzes the hydrolysis of UDP-3-O-myristoyl-N-acetylglucosamine to form UDP-3-O-myristoylglucosamine and acetate, the committed step in lipid A biosynthesis. This Oleidesulfovibrio alaskensis (strain ATCC BAA-1058 / DSM 17464 / G20) (Desulfovibrio alaskensis) protein is UDP-3-O-acyl-N-acetylglucosamine deacetylase.